Reading from the N-terminus, the 631-residue chain is MBT domain-containing protein 1 (631 aa).

Positions 1-31 are disordered; it reads MFDGYDSCSEDTSSSSSSEESEEEVAPLPSN. The FCS-type zinc-finger motif lies at 45–80; the sequence is PDGKSGMATCEMCGMVGVRDAFYSKTKRFCSVSCSR. Zn(2+)-binding residues include Cys54, Cys57, Cys74, and Cys78. Residue Lys115 is modified to N6-acetyllysine. 4 MBT repeats span residues 144-248, 256-353, 354-459, and 467-563; these read FSWG…LVPP, TNWK…IGHR, FKRS…LTPP, and FKWF…LQPP. Residues 563–631 are disordered; the sequence is PASQSSRESQ…SATVYIKQEP (69 aa). A compositionally biased stretch (low complexity) spans 564-576; that stretch reads ASQSSRESQSASS. Basic residues predominate over residues 577–593; the sequence is KQKKKAKSQQYKGHKKM.

As to quaternary structure, monomer. Component of the NuA4 histone acetyltransferase complex. Interacts with EPC1; interaction is direct and promotes recruitment of MBTD1 into the NuA4 histone acetyltransferase complex.

It is found in the nucleus. The protein localises to the chromosome. Its function is as follows. Chromatin reader component of the NuA4 histone acetyltransferase complex, a multiprotein complex involved in transcriptional activation of select genes principally by acetylation of nucleosomal histones H4 and H2A. The NuA4 complex plays a direct role in repair of DNA double-strand breaks (DSBs) by promoting homologous recombination (HR). MBTD1 specifically recognizes and binds monomethylated and dimethylated 'Lys-20' on histone H4 (H4K20me1 and H4K20me2, respectively). In the NuA4 complex, MBTD1 promotes recruitment of the complex to H4K20me marks by competing with TP53BP1 for binding to H4K20me. Following recruitment to H4K20me at DNA breaks, the NuA4 complex catalyzes acetylation of 'Lys-15' on histone H2A (H2AK15), blocking the ubiquitination mark required for TP53BP1 localization at DNA breaks, thereby promoting homologous recombination (HR). This Mus musculus (Mouse) protein is MBT domain-containing protein 1.